A 508-amino-acid chain; its full sequence is Photosystem II CP47 reaction center protein (508 aa).

Transmembrane regions (helical) follow at residues 21–36 (AVHIMHTALVAGWAGS), 101–115 (IVFSGLCFLAAIWHW), 140–156 (GIHLFLAGLACFGFGAF), 203–218 (IAAGTLGILAGLFHLS), 237–252 (VLSSSIAAVFFAAFVV), and 457–472 (SFALLFFFGHIWHGAR).

It belongs to the PsbB/PsbC family. PsbB subfamily. In terms of assembly, PSII is composed of 1 copy each of membrane proteins PsbA, PsbB, PsbC, PsbD, PsbE, PsbF, PsbH, PsbI, PsbJ, PsbK, PsbL, PsbM, PsbT, PsbX, PsbY, PsbZ, Psb30/Ycf12, at least 3 peripheral proteins of the oxygen-evolving complex and a large number of cofactors. It forms dimeric complexes. Binds multiple chlorophylls. PSII binds additional chlorophylls, carotenoids and specific lipids. is required as a cofactor.

The protein resides in the plastid. It localises to the chloroplast thylakoid membrane. One of the components of the core complex of photosystem II (PSII). It binds chlorophyll and helps catalyze the primary light-induced photochemical processes of PSII. PSII is a light-driven water:plastoquinone oxidoreductase, using light energy to abstract electrons from H(2)O, generating O(2) and a proton gradient subsequently used for ATP formation. This Daucus carota (Wild carrot) protein is Photosystem II CP47 reaction center protein.